Consider the following 116-residue polypeptide: Large ribosomal subunit protein bL20 (116 aa).

It belongs to the bacterial ribosomal protein bL20 family.

Binds directly to 23S ribosomal RNA and is necessary for the in vitro assembly process of the 50S ribosomal subunit. It is not involved in the protein synthesizing functions of that subunit. In Nitratiruptor sp. (strain SB155-2), this protein is Large ribosomal subunit protein bL20.